The chain runs to 118 residues: Large ribosomal subunit protein uL18 (118 aa).

It belongs to the universal ribosomal protein uL18 family. In terms of assembly, part of the 50S ribosomal subunit; part of the 5S rRNA/L5/L18/L25 subcomplex. Contacts the 5S and 23S rRNAs.

In terms of biological role, this is one of the proteins that bind and probably mediate the attachment of the 5S RNA into the large ribosomal subunit, where it forms part of the central protuberance. This chain is Large ribosomal subunit protein uL18, found in Rickettsia peacockii (strain Rustic).